The chain runs to 427 residues: Acyltransferase fer5 (427 aa).

The interval 1–24 is disordered; it reads MTAATSVQPSPAPRQPGLRATFNP. Residue histidine 342 coordinates substrate. Glutamate 380 functions as the Proton acceptor in the catalytic mechanism.

It belongs to the lysine N-acyltransferase mbtK family.

Its pathway is siderophore biosynthesis. Its function is as follows. Acyltransferase; part of the gene cluster that mediates the biosynthesis of siderophore ferrichrome A which is contributing to organismal virulence. The first step of ferrichrome A biosynthesis is performed by the HMG-CoA synthase hcs1 which catalyzes the generation of HMG-CoA and CoA using acetoacetyl-CoA and acetyl-CoA as substrates. The enoyl-CoA isomerase/hydratase fer4 then catalyzes the conversion of hcs1-produced HMG-CoA to methylglutaconyl-CoA. The acyltransferase fer5 then fuses the fer4-generated methylglutaconyl-CoA with sid1-generated hydroxyornithine to yield methylglutaconyl hydroxyornithine. Methylglutaconyl hydroxyornithine is then available for use by the NRPS fer3 to generate ferrichrome A. This is Acyltransferase fer5 from Mycosarcoma maydis (Corn smut fungus).